The chain runs to 153 residues: Ribosomal RNA large subunit methyltransferase H (153 aa).

Residues Leu-70, Gly-102, and 121-126 each bind S-adenosyl-L-methionine; that span reads LSRMTF.

Belongs to the RNA methyltransferase RlmH family. In terms of assembly, homodimer.

It localises to the cytoplasm. The catalysed reaction is pseudouridine(1915) in 23S rRNA + S-adenosyl-L-methionine = N(3)-methylpseudouridine(1915) in 23S rRNA + S-adenosyl-L-homocysteine + H(+). Functionally, specifically methylates the pseudouridine at position 1915 (m3Psi1915) in 23S rRNA. This chain is Ribosomal RNA large subunit methyltransferase H, found in Geotalea uraniireducens (strain Rf4) (Geobacter uraniireducens).